An 82-amino-acid polypeptide reads, in one-letter code: Cell division topological specificity factor (82 aa).

It belongs to the MinE family.

Functionally, prevents the cell division inhibition by proteins MinC and MinD at internal division sites while permitting inhibition at polar sites. This ensures cell division at the proper site by restricting the formation of a division septum at the midpoint of the long axis of the cell. The sequence is that of Cell division topological specificity factor from Hahella chejuensis (strain KCTC 2396).